Consider the following 367-residue polypeptide: Pre-small/secreted glycoprotein (367 aa).

Positions 1 to 33 (MGSGYQLLQLPRERFRKTSFLVWVIILFQRAIS) are cleaved as a signal peptide. N-linked (GlcNAc...) asparagine; by host glycosylation is present at Asn-41. Intrachain disulfides connect Cys-109–Cys-136 and Cys-122–Cys-148. 4 N-linked (GlcNAc...) asparagine; by host glycosylation sites follow: Asn-205, Asn-239, Asn-258, and Asn-269.

The protein belongs to the filoviruses glycoprotein family. In terms of assembly, homodimer; disulfide-linked. The homodimers are linked by two disulfide bonds in a parallel orientation. Monomer. This precursor is processed into mature sGP and delta-peptide by host furin or furin-like proteases. The cleavage site corresponds to the furin optimal cleavage sequence [KR]-X-[KR]-R. Post-translationally, N-glycosylated. In terms of processing, O-glycosylated.

The protein resides in the secreted. Functionally, seems to possess an anti-inflammatory activity as it can reverse the barrier-decreasing effects of TNF alpha. Might therefore contribute to the lack of inflammatory reaction seen during infection in spite the of extensive necrosis and massive virus production. Does not seem to be involved in activation of primary macrophages. Does not seem to interact specifically with neutrophils. In terms of biological role, viroporin that permeabilizes mammalian cell plasma membranes. It acts by altering permeation of ionic compounds and small molecules. This activity may lead to viral enterotoxic activity. The sequence is that of Pre-small/secreted glycoprotein (GP) from Reston ebolavirus (strain Philippines-96) (REBOV).